Reading from the N-terminus, the 411-residue chain is Formate-dependent phosphoribosylglycinamide formyltransferase (411 aa).

Residue 25-26 (EL) participates in N(1)-(5-phospho-beta-D-ribosyl)glycinamide binding. ATP is bound by residues arginine 118, lysine 159, 164 to 169 (SSGAGQ), 199 to 202 (EQYI), and glutamate 207. Residues 123–318 (TFAHDKLGLP…EFDLHARAIL (196 aa)) form the ATP-grasp domain. Mg(2+)-binding residues include glutamate 277 and glutamate 289. Residues aspartate 296, lysine 366, and 373–374 (RR) each bind N(1)-(5-phospho-beta-D-ribosyl)glycinamide.

The protein belongs to the PurK/PurT family. As to quaternary structure, homodimer.

The enzyme catalyses N(1)-(5-phospho-beta-D-ribosyl)glycinamide + formate + ATP = N(2)-formyl-N(1)-(5-phospho-beta-D-ribosyl)glycinamide + ADP + phosphate + H(+). It functions in the pathway purine metabolism; IMP biosynthesis via de novo pathway; N(2)-formyl-N(1)-(5-phospho-D-ribosyl)glycinamide from N(1)-(5-phospho-D-ribosyl)glycinamide (formate route): step 1/1. Functionally, involved in the de novo purine biosynthesis. Catalyzes the transfer of formate to 5-phospho-ribosyl-glycinamide (GAR), producing 5-phospho-ribosyl-N-formylglycinamide (FGAR). Formate is provided by PurU via hydrolysis of 10-formyl-tetrahydrofolate. The polypeptide is Formate-dependent phosphoribosylglycinamide formyltransferase (Corynebacterium jeikeium (strain K411)).